We begin with the raw amino-acid sequence, 369 residues long: Protein RecA (369 aa).

66-73 (GPESSGKT) contributes to the ATP binding site. The disordered stretch occupies residues 328–369 (GIDAESLEEKEDPEKVKEQRAKKAAPGEEKPAEPASPEKTDK). Residues 339-369 (DPEKVKEQRAKKAAPGEEKPAEPASPEKTDK) are compositionally biased toward basic and acidic residues.

It belongs to the RecA family.

It localises to the cytoplasm. Functionally, can catalyze the hydrolysis of ATP in the presence of single-stranded DNA, the ATP-dependent uptake of single-stranded DNA by duplex DNA, and the ATP-dependent hybridization of homologous single-stranded DNAs. It interacts with LexA causing its activation and leading to its autocatalytic cleavage. In Lactobacillus delbrueckii subsp. bulgaricus (strain ATCC BAA-365 / Lb-18), this protein is Protein RecA.